A 142-amino-acid chain; its full sequence is ATP synthase subunit b' (142 aa).

The helical transmembrane segment at 7–27 threads the bilayer; it reads TLPLMMFQFFLLVAVLNAVFF.

This sequence belongs to the ATPase B chain family. As to quaternary structure, F-type ATPases have 2 components, F(1) - the catalytic core - and F(0) - the membrane proton channel. F(1) has five subunits: alpha(3), beta(3), gamma(1), delta(1), epsilon(1). F(0) has four main subunits: a(1), b(1), b'(1) and c(10-14). The alpha and beta chains form an alternating ring which encloses part of the gamma chain. F(1) is attached to F(0) by a central stalk formed by the gamma and epsilon chains, while a peripheral stalk is formed by the delta, b and b' chains.

Its subcellular location is the cellular thylakoid membrane. Its function is as follows. F(1)F(0) ATP synthase produces ATP from ADP in the presence of a proton or sodium gradient. F-type ATPases consist of two structural domains, F(1) containing the extramembraneous catalytic core and F(0) containing the membrane proton channel, linked together by a central stalk and a peripheral stalk. During catalysis, ATP synthesis in the catalytic domain of F(1) is coupled via a rotary mechanism of the central stalk subunits to proton translocation. In terms of biological role, component of the F(0) channel, it forms part of the peripheral stalk, linking F(1) to F(0). The b'-subunit is a diverged and duplicated form of b found in plants and photosynthetic bacteria. The chain is ATP synthase subunit b' from Acaryochloris marina (strain MBIC 11017).